The following is a 171-amino-acid chain: Co-chaperone protein HscB homolog (171 aa).

The J domain maps to 2–74; it reads NHFELFGLPP…ISRAEYLLSQ (73 aa).

Belongs to the HscB family. Interacts with HscA and stimulates its ATPase activity.

Co-chaperone involved in the maturation of iron-sulfur cluster-containing proteins. Seems to help targeting proteins to be folded toward HscA. In Vibrio vulnificus (strain YJ016), this protein is Co-chaperone protein HscB homolog.